A 1866-amino-acid polypeptide reads, in one-letter code: Nucleoporin Nup188 (1866 aa).

The protein belongs to the Nup188 family. In terms of assembly, part of the nuclear pore complex (NPC).

It localises to the nucleus. The protein resides in the nuclear pore complex. In terms of biological role, component of the nuclear pore complex (NPC), a complex required for the trafficking across the nuclear envelope. Required for proper protein transport into the nucleus. The sequence is that of Nucleoporin Nup188 from Drosophila melanogaster (Fruit fly).